The sequence spans 89 residues: Small ribosomal subunit protein uS15 (89 aa).

This sequence belongs to the universal ribosomal protein uS15 family. In terms of assembly, part of the 30S ribosomal subunit. Forms a bridge to the 50S subunit in the 70S ribosome, contacting the 23S rRNA.

Functionally, one of the primary rRNA binding proteins, it binds directly to 16S rRNA where it helps nucleate assembly of the platform of the 30S subunit by binding and bridging several RNA helices of the 16S rRNA. In terms of biological role, forms an intersubunit bridge (bridge B4) with the 23S rRNA of the 50S subunit in the ribosome. This Shewanella piezotolerans (strain WP3 / JCM 13877) protein is Small ribosomal subunit protein uS15.